The primary structure comprises 329 residues: Sex comb on midleg-like protein 1 (329 aa).

Phosphoserine is present on residues Ser138 and Ser238. The region spanning 258–325 is the SAM domain; that stretch reads WSVEAVVLFL…YYIDRLKQGK (68 aa).

It belongs to the SCM family.

The protein resides in the nucleus. Its function is as follows. Putative Polycomb group (PcG) protein. PcG proteins act by forming multiprotein complexes, which are required to maintain the transcriptionally repressive state of homeotic genes throughout development. May be involved in spermatogenesis during sexual maturation. The polypeptide is Sex comb on midleg-like protein 1 (SCML1) (Nomascus leucogenys (Northern white-cheeked gibbon)).